The sequence spans 181 residues: Large ribosomal subunit protein uL5c (181 aa).

This sequence belongs to the universal ribosomal protein uL5 family. As to quaternary structure, part of the 50S ribosomal subunit; contacts the 5S rRNA.

Its subcellular location is the plastid. It is found in the chloroplast. Binds 5S rRNA, forms part of the central protuberance of the 50S subunit. This chain is Large ribosomal subunit protein uL5c (rpl5), found in Porphyra purpurea (Red seaweed).